Reading from the N-terminus, the 601-residue chain is NAD(+)--arginine ADP-ribosyltransferase Chelt (601 aa).

Positions 1-18 are cleaved as a signal peptide; it reads MKTIISLIFIMFPLFVSA. NAD(+) is bound by residues 26 to 43 and glutamate 130; that span reads ADSR…LYPR. Glutamate 130 is a catalytic residue. A disulfide bond links cysteine 205 and cysteine 220.

This sequence belongs to the enterotoxin A family.

It is found in the secreted. It catalyses the reaction L-arginyl-[protein] + NAD(+) = N(omega)-(ADP-D-ribosyl)-L-arginyl-[protein] + nicotinamide + H(+). Functionally, a probable mono(ADP-ribosyl)transferase, it may ADP-ribosylate Arg in target protein(s). Upon expression in yeast cells causes cell death. The chain is NAD(+)--arginine ADP-ribosyltransferase Chelt from Vibrio cholerae.